A 360-amino-acid polypeptide reads, in one-letter code: 3-dehydroquinate synthase (360 aa).

NAD(+) contacts are provided by residues 71–76, 105–109, 129–130, lysine 142, lysine 151, and 169–172; these read DGEQYK, GVVGD, TT, and TLNT. The Zn(2+) site is built by glutamate 184, histidine 248, and histidine 265.

This sequence belongs to the sugar phosphate cyclases superfamily. Dehydroquinate synthase family. Requires Co(2+) as cofactor. Zn(2+) serves as cofactor. NAD(+) is required as a cofactor.

The protein resides in the cytoplasm. It carries out the reaction 7-phospho-2-dehydro-3-deoxy-D-arabino-heptonate = 3-dehydroquinate + phosphate. The protein operates within metabolic intermediate biosynthesis; chorismate biosynthesis; chorismate from D-erythrose 4-phosphate and phosphoenolpyruvate: step 2/7. Its function is as follows. Catalyzes the conversion of 3-deoxy-D-arabino-heptulosonate 7-phosphate (DAHP) to dehydroquinate (DHQ). This chain is 3-dehydroquinate synthase, found in Coxiella burnetii (strain CbuK_Q154) (Coxiella burnetii (strain Q154)).